A 750-amino-acid polypeptide reads, in one-letter code: Amyloid-beta A4 precursor protein-binding family A member 2 (750 aa).

2 disordered regions span residues 1 to 94 (MAHR…PEEE) and 143 to 346 (DSVG…IPET). A Phosphoserine modification is found at Ser-11. Positions 70–80 (GDSSSDYVNNT) are enriched in polar residues. Acidic residues predominate over residues 81 to 94 (SEEEDYDEGLPEEE). The STXBP1-binding stretch occupies residues 185 to 271 (HYCSSKESYQ…STEACPPSDT (87 aa)). Phosphoserine is present on Ser-209. Over residues 219 to 228 (DLEEQEEDID) the composition is skewed to acidic residues. Polar residues-rich tracts occupy residues 238–248 (LSMTSITSASE) and 332–344 (SDLNGPTDNNNIP). One can recognise a PID domain in the interval 367 to 556 (LIDGIIFAAN…IINTQEMYND (190 aa)). PDZ domains follow at residues 569-654 (ELQL…NIVS) and 660-736 (TVLI…MPAA).

As to quaternary structure, part of a multimeric complex containing STXBP1 and syntaxin-1. Binds to the cytoplasmic domain of amyloid-beta protein, and to the nuclear factor NF-kappa-B/p65 via its PDZ domain. Interacts with the N-terminal domain of NECAB3. In terms of tissue distribution, specifically expressed in neurons, predominantly of the cerebellum, hippocampus, and spinal cord. Lesser extent in neurons of the cerebral cortex and anterior thalmic nuclei.

In terms of biological role, putative function in synaptic vesicle exocytosis by binding to STXBP1, an essential component of the synaptic vesicle exocytotic machinery. May modulate processing of the amyloid-beta precursor protein (APP) and hence formation of APP-beta. In Mus musculus (Mouse), this protein is Amyloid-beta A4 precursor protein-binding family A member 2 (Apba2).